The chain runs to 471 residues: Cleavage and polyadenylation specificity factor subunit 7 (471 aa).

Residues Val-34–Pro-68 form a disordered region. Pro residues predominate over residues Glu-50 to Lys-62. One can recognise an RRM domain in the interval Ala-82–Arg-162. The tract at residues Glu-176–Ser-220 is disordered. Residues His-190–Asp-199 show a composition bias toward basic and acidic residues. The residue at position 203 (Thr-203) is a Phosphothreonine. Phosphoserine is present on Ser-205. Lys-354 is covalently cross-linked (Glycyl lysine isopeptide (Lys-Gly) (interchain with G-Cter in SUMO2)). The disordered stretch occupies residues Ser-409 to His-471. Phosphoserine occurs at positions 413 and 423. The tract at residues Arg-418–Arg-469 is arg/Ser-rich domain. Basic and acidic residues-rich tracts occupy residues Glu-425 to Ser-434 and Leu-441 to His-471.

Belongs to the RRM CPSF6/7 family. Component of the cleavage factor Im (CFIm) complex which is a heterotetramer composed of two subunits of NUDT21/CPSF5 and two subunits of CPSF6 or CPSF7 or a heterodimer of CPSF6 and CPSF7. The cleavage factor Im (CFIm) complex associates with the CPSF and CSTF complexes to promote the assembly of the core mRNA 3'-processing machinery. Interacts with NUDT21/CPSF5. Interacts (via Arg/Ser-rich domain) with FIP1L1 (preferentially via unphosphorylated form and Arg/Glu/Asp-rich region); this interaction mediates, at least in part, the interaction between the CFIm and CPSF complexes and may be inhibited by CPSF7 hyper-phosphorylation. Post-translationally, phosphorylated. Asymmetrically dimethylated on arginine residues by PRMT1.

It is found in the nucleus. Its subcellular location is the cytoplasm. Functionally, component of the cleavage factor Im (CFIm) complex that functions as an activator of the pre-mRNA 3'-end cleavage and polyadenylation processing required for the maturation of pre-mRNA into functional mRNAs. CFIm contributes to the recruitment of multiprotein complexes on specific sequences on the pre-mRNA 3'-end, so called cleavage and polyadenylation signals (pA signals). Most pre-mRNAs contain multiple pA signals, resulting in alternative cleavage and polyadenylation (APA) producing mRNAs with variable 3'-end formation. The CFIm complex acts as a key regulator of cleavage and polyadenylation site choice during APA through its binding to 5'-UGUA-3' elements localized in the 3'-untranslated region (UTR) for a huge number of pre-mRNAs. CPSF7 activates directly the mRNA 3'-processing machinery. Binds to pA signals in RNA substrates. This is Cleavage and polyadenylation specificity factor subunit 7 from Mus musculus (Mouse).